The chain runs to 200 residues: uncharacterized protein (200 aa).

Positions 1-24 (MAIDKLPLLLFLSILLCLNRPVLS) are cleaved as a signal peptide. 5 N-linked (GlcNAc...) asparagine glycosylation sites follow: Asn-44, Asn-72, Asn-99, Asn-124, and Asn-135. Ser-174 carries the GPI-anchor amidated serine lipid modification. A propeptide spans 175 to 200 (NGFTFGIGLVSYLVIFMYSSFCFFLF) (removed in mature form).

Belongs to the UPF0277 family.

It is found in the cell membrane. This is an uncharacterized protein from Arabidopsis thaliana (Mouse-ear cress).